We begin with the raw amino-acid sequence, 102 residues long: ATP-dependent Clp protease adapter protein ClpS (102 aa).

The protein belongs to the ClpS family. In terms of assembly, binds to the N-terminal domain of the chaperone ClpA.

Its function is as follows. Involved in the modulation of the specificity of the ClpAP-mediated ATP-dependent protein degradation. The protein is ATP-dependent Clp protease adapter protein ClpS of Shewanella woodyi (strain ATCC 51908 / MS32).